The chain runs to 651 residues: Ion-translocating oxidoreductase complex subunit C (651 aa).

4Fe-4S ferredoxin-type domains are found at residues 368–398 and 408–437; these read EYAE…QQLY and KSEE…IQYF. [4Fe-4S] cluster contacts are provided by Cys-378, Cys-381, Cys-384, Cys-388, Cys-417, Cys-420, Cys-423, and Cys-427. Basic and acidic residues-rich tracts occupy residues 465-477 and 485-513; these read QARM…ERKA and ARRE…KANE. Disordered stretches follow at residues 465 to 565 and 583 to 624; these read QARM…QPTD and LAQA…DPKK. 2 stretches are compositionally biased toward polar residues: residues 554–564 and 587–600; these read VENQEQQTQPT and NSTS…QTAE. A compositionally biased stretch (basic and acidic residues) spans 602–614; sequence EVEKTKSAVEKTQ.

This sequence belongs to the 4Fe4S bacterial-type ferredoxin family. RnfC subfamily. In terms of assembly, the complex is composed of six subunits: RnfA, RnfB, RnfC, RnfD, RnfE and RnfG. [4Fe-4S] cluster is required as a cofactor.

It is found in the cell inner membrane. Its function is as follows. Part of a membrane-bound complex that couples electron transfer with translocation of ions across the membrane. The chain is Ion-translocating oxidoreductase complex subunit C from Haemophilus influenzae (strain PittEE).